A 794-amino-acid polypeptide reads, in one-letter code: DNA mismatch repair protein pms1 (794 aa).

Disordered regions lie at residues 351 to 384 (SQIP…SFSY) and 409 to 442 (GASL…TASS). A compositionally biased stretch (polar residues) spans 352-371 (QIPDSSGDSTDQELPQSIPA). Over residues 419–429 (LPERLQKDSMR) the composition is skewed to basic and acidic residues. Polar residues predominate over residues 430 to 442 (RSSPLNEKVTASS).

This sequence belongs to the DNA mismatch repair MutL/HexB family.

This protein is involved in the repair of mismatches in DNA. This chain is DNA mismatch repair protein pms1 (pms1), found in Schizosaccharomyces pombe (strain 972 / ATCC 24843) (Fission yeast).